A 151-amino-acid polypeptide reads, in one-letter code: Ribosome maturation factor RimP (151 aa).

This sequence belongs to the RimP family.

It is found in the cytoplasm. Functionally, required for maturation of 30S ribosomal subunits. In Endomicrobium trichonymphae, this protein is Ribosome maturation factor RimP.